Here is a 430-residue protein sequence, read N- to C-terminus: Putative O-antigen transporter (430 aa).

Helical transmembrane passes span 23 to 39 (IIIAGVQLASISYLISM), 45 to 61 (YAIFSLLTGLLVWCSAV), 96 to 112 (IAIIFFIALFYIFSGVI), 131 to 147 (LFFTSCLVFSSIGIGAI), 163 to 179 (LLNALSYMIGMLGLLYI), 192 to 208 (LIVLYLPVGMISLCYIV), 236 to 252 (LFTLLSIVVLQTDYMVI), 266 to 282 (VTMKIFGLVFFIYTAIL), 309 to 325 (ILLGSLYVVGCTIFIYL), 342 to 358 (VSILSFMLIGIYFCIRV), 373 to 389 (LKILWILVPLQAIIGGI), and 400 to 416 (ISGVLLGLIISFALTVF).

Its subcellular location is the cell inner membrane. It functions in the pathway bacterial outer membrane biogenesis; LPS O-antigen biosynthesis. May be involved in the translocation process of the nascent O-polysaccharide molecules and/or its ligation to lipid A core units. The sequence is that of Putative O-antigen transporter (rfbX) from Salmonella typhimurium (strain LT2 / SGSC1412 / ATCC 700720).